Here is a 154-residue protein sequence, read N- to C-terminus: Aspartate carbamoyltransferase regulatory chain (154 aa).

Zn(2+)-binding residues include Cys-109, Cys-114, Cys-138, and Cys-141.

Belongs to the PyrI family. Contains catalytic and regulatory chains. Zn(2+) is required as a cofactor.

In terms of biological role, involved in allosteric regulation of aspartate carbamoyltransferase. The chain is Aspartate carbamoyltransferase regulatory chain from Yersinia enterocolitica serotype O:8 / biotype 1B (strain NCTC 13174 / 8081).